Reading from the N-terminus, the 1041-residue chain is Importin-9 (1041 aa).

N-acetylalanine is present on A2. Positions 43 to 119 (AEEQIKVLEV…RELLPNGLRE (77 aa)) constitute an Importin N-terminal domain. Positions 936–967 (QATPAEWNQDDSNDMWEDQEEEEEEEEDGLAG) are disordered. A compositionally biased stretch (acidic residues) spans 943-964 (NQDDSNDMWEDQEEEEEEEEDG).

This sequence belongs to the importin beta family. As to quaternary structure, interacts with histones H2A, H2B, H3 and H4. The binding is coupled to RanGTP cycles. Interacts with AKIRIN2; promoting association with pre-assembled proteasomes. Associates with pre-assembled proteasomes; interaction is indirect and mediated via interaction with AKIRIN2. Interacts with PPP2R1A and PPP2R1B.

It is found in the cytoplasm. It localises to the nucleus. In terms of biological role, nuclear transport receptor that mediates nuclear import of proteins, such as histones, proteasome and actin. Serves as receptor for nuclear localization signals (NLS) in cargo substrates. Is thought to mediate docking of the importin/substrate complex to the nuclear pore complex (NPC) through binding to nucleoporin and the complex is subsequently translocated through the pore by an energy requiring, Ran-dependent mechanism. At the nucleoplasmic side of the NPC, Ran binds to the importin, the importin/substrate complex dissociates and importin is re-exported from the nucleus to the cytoplasm where GTP hydrolysis releases Ran. The directionality of nuclear import is thought to be conferred by an asymmetric distribution of the GTP- and GDP-bound forms of Ran between the cytoplasm and nucleus. Mediates the import of pre-assembled proteasomes into the nucleus; AKIRIN2 acts as a molecular bridge between IPO9 and the proteasome complex. Mediates the nuclear import of histones H2A, H2B, H4 and H4. In addition to nuclear import, also acts as a chaperone for histones by preventing inappropriate non-nucleosomal interactions. Mediates the nuclear import of actin. In Mus musculus (Mouse), this protein is Importin-9.